A 185-amino-acid polypeptide reads, in one-letter code: Ribosome-recycling factor (185 aa).

Belongs to the RRF family.

The protein resides in the cytoplasm. In terms of biological role, responsible for the release of ribosomes from messenger RNA at the termination of protein biosynthesis. May increase the efficiency of translation by recycling ribosomes from one round of translation to another. The sequence is that of Ribosome-recycling factor from Mycobacterium avium (strain 104).